A 368-amino-acid chain; its full sequence is Phospho-N-acetylmuramoyl-pentapeptide-transferase (368 aa).

10 consecutive transmembrane segments (helical) span residues 2-22, 51-71, 80-100, 116-136, 166-186, 193-213, 234-254, 256-276, 277-297, and 340-360; these read IALI…TPLL, TLGG…SALY, PTWA…LGFI, VGGK…LALI, IVAI…WTNA, LDGL…IIAM, PLDL…FLWY, CNPA…GLFA, ALSI…LFVV, and FWIV…GNWV.

The protein belongs to the glycosyltransferase 4 family. MraY subfamily. Requires Mg(2+) as cofactor.

Its subcellular location is the cell membrane. The enzyme catalyses UDP-N-acetyl-alpha-D-muramoyl-L-alanyl-gamma-D-glutamyl-meso-2,6-diaminopimeloyl-D-alanyl-D-alanine + di-trans,octa-cis-undecaprenyl phosphate = di-trans,octa-cis-undecaprenyl diphospho-N-acetyl-alpha-D-muramoyl-L-alanyl-D-glutamyl-meso-2,6-diaminopimeloyl-D-alanyl-D-alanine + UMP. Its pathway is cell wall biogenesis; peptidoglycan biosynthesis. Functionally, catalyzes the initial step of the lipid cycle reactions in the biosynthesis of the cell wall peptidoglycan: transfers peptidoglycan precursor phospho-MurNAc-pentapeptide from UDP-MurNAc-pentapeptide onto the lipid carrier undecaprenyl phosphate, yielding undecaprenyl-pyrophosphoryl-MurNAc-pentapeptide, known as lipid I. This is Phospho-N-acetylmuramoyl-pentapeptide-transferase from Bifidobacterium animalis subsp. lactis (strain AD011).